The primary structure comprises 227 residues: MIGILAGMGPKSTSPFIDKVIDYCQKLYGASNDIDYPHMMIYSCPTPFYADRPIDHDEMKKAIIDGAVKLEKTGVDFIALPCNTAHVYYEEIQQALSVPMLHIVEETIKEIPHPAKKAVVLGTEPTIQSAIYQKVLKGNGQEVIHKDHWQQAVNQLIAAIKQPNHMQHTQALWQTLYEEISQHADIIISACTDLNAVLDHIQSEIPIIDSSACLAKSTVSTYLAYQS.

Residue Asp51–Pro53 coordinates substrate. Residue Cys82 is the Proton donor/acceptor of the active site. Substrate contacts are provided by residues Asn83–Ala85 and Lys161. Catalysis depends on Cys191, which acts as the Proton donor/acceptor.

Belongs to the aspartate/glutamate racemases family. Homodimer.

The catalysed reaction is an L-alpha-amino acid = a D-alpha-amino acid. The enzyme catalyses (2S,6S)-2,6-diaminopimelate = meso-2,6-diaminopimelate. It carries out the reaction L-lysine = D-lysine. It catalyses the reaction L-arginine = D-arginine. The catalysed reaction is L-ornithine = D-ornithine. The enzyme catalyses L-histidine = D-histidine. It carries out the reaction L-alanine = D-alanine. It catalyses the reaction L-tyrosine = D-tyrosine. The catalysed reaction is L-phenylalanine = D-phenylalanine. The enzyme catalyses L-serine = D-serine. It carries out the reaction L-glutamine = D-glutamine. It catalyses the reaction L-methionine = D-methionine. The catalysed reaction is L-asparagine = D-asparagine. The enzyme catalyses L-homoserine = D-homoserine. Amino-acid racemase able to utilize a broad range of substrates. Preferentially catalyzes the epimerization of LL-diaminopimelate, as well as the racemization of D-lysine, L-arginine, L-ornithine, L-lysine and D-arginine. Has lower activity against D-ornithine, L-histidine, L-alanine, L-tyrosine, L-phenylalanine, L-serine, L-glutamine, L-methionine, L-asparagine and L-homoserine. Has weak activity against L-norleucine, L-aminobutyric acid and L-norvaline. Has no activity toward nine L-amino acids (Thr, Glu, Asp, Val, Leu, Ile, Trp, Cit and Aad). D-amino acids might be used as components of peptidoglycan and/or be involved in peptidoglycan metabolism and remodeling. The polypeptide is Broad specificity amino-acid racemase RacX (racX) (Bacillus subtilis (strain 168)).